The chain runs to 567 residues: Hexose transporter HXT15 (567 aa).

Polar residues predominate over residues 1 to 19 (MASEQSSPEINADNLNSSA). Residues 1–32 (MASEQSSPEINADNLNSSAADVHVQPPGEKEW) are disordered. The Cytoplasmic segment spans residues 1–55 (MASEQSSPEINADNLNSSAADVHVQPPGEKEWSDGFYDKEVINGNTPDAPKRGFL). A helical transmembrane segment spans residues 56 to 76 (GYLIIYLLCYPVSFGGFLPGW). The Extracellular segment spans residues 77-112 (DSGITAGFINMDNFKMNFGSYKHSTGEYYLSNVRMG). The chain crosses the membrane as a helical span at residues 113–133 (LLVAMFSVGCSIGGVAFARLA). At 134–139 (DTLGRR) the chain is on the cytoplasmic side. A helical transmembrane segment spans residues 140–160 (LAIVIVVLVYMVGAIIQISSN). The Extracellular segment spans residues 161–170 (HKWYQYFVGK). A helical membrane pass occupies residues 171–191 (IIYGLGAGGCSVLCPMLLSEI). The Cytoplasmic segment spans residues 192 to 197 (APTDLR). Residues 198–218 (GGLVSLYQLNMTFGIFLGYCS) traverse the membrane as a helical segment. Topologically, residues 219–232 (VYGTRKYSNTAQWR) are extracellular. Residues 233–253 (IPVGLCFLWALIIIVGMLLVP) traverse the membrane as a helical segment. Residues 254 to 336 (ESPRYLIECE…VQTFLQLTGE (83 aa)) lie on the Cytoplasmic side of the membrane. The helical transmembrane segment at 337–353 (NYFFFYGTTIFKSVGLT) threads the bilayer. Over 354–359 (DGFETS) the chain is Extracellular. The chain crosses the membrane as a helical span at residues 360 to 377 (IVLGTVNFFSTIIAVMVV). Over 378 to 384 (DKIGRRK) the chain is Cytoplasmic. A helical transmembrane segment spans residues 385–405 (CLLFGAASMMACMVIFASIGV). Topologically, residues 406-427 (KCLYPHGQDGPSSKGAGNAMIV) are extracellular. A helical membrane pass occupies residues 428-448 (FTCFYIFCFATTWAPVAYIVV). At 449–465 (AESFPSKVKSKAMSIST) the chain is on the cytoplasmic side. Residues 466–486 (AFNWLWQFLIGFFTPFITGSI) traverse the membrane as a helical segment. Residue His487 is a topological domain, extracellular. A helical membrane pass occupies residues 488-508 (FYYGYVFVGCLVAMFLYVFFF). The Cytoplasmic segment spans residues 509-567 (LPETIGLSLEEIQLLYEEGIKPWKSASWVPPSRRGASSRETEAKKKSWKEVLKFPKSFN). Positions 533–555 (SASWVPPSRRGASSRETEAKKKS) are disordered. The span at 545 to 555 (SSRETEAKKKS) shows a compositional bias: basic and acidic residues.

The protein belongs to the major facilitator superfamily. Sugar transporter (TC 2.A.1.1) family.

It localises to the membrane. Its function is as follows. Probable glucose transporter. The polypeptide is Hexose transporter HXT15 (HXT15) (Saccharomyces cerevisiae (strain ATCC 204508 / S288c) (Baker's yeast)).